The following is a 374-amino-acid chain: Outer membrane protein assembly factor BamC (374 aa).

A signal peptide spans 1–22 (MSKFYKSGRVTTAVIVALSLSA). Cys-23 is lipidated: N-palmitoyl cysteine. The S-diacylglycerol cysteine moiety is linked to residue Cys-23.

Belongs to the BamC family. In terms of assembly, part of the Bam complex.

The protein localises to the cell outer membrane. In terms of biological role, part of the outer membrane protein assembly complex, which is involved in assembly and insertion of beta-barrel proteins into the outer membrane. This is Outer membrane protein assembly factor BamC from Psychromonas ingrahamii (strain DSM 17664 / CCUG 51855 / 37).